Here is a 114-residue protein sequence, read N- to C-terminus: Cholecystokinin (114 aa).

The signal sequence occupies residues 1–20 (MNGGLCLCVLMAVLAAGTLA). Tyr-96 carries the sulfotyrosine modification. A Phenylalanine amide modification is found at Phe-102. Residues 106-114 (SAEEYEYTS) constitute a propeptide that is removed on maturation. Tyr-110 and Tyr-112 each carry sulfotyrosine.

The protein belongs to the gastrin/cholecystokinin family. As to quaternary structure, binds to CCK-A receptors in the pancreas and CCK-B receptors in the brain. The precursor is cleaved by proteases to produce a number of active cholecystokinins. Brain contains CCK-octapeptide (CCK8) and several CCK-desoctapeptides; whereas pig gut contains intact CCK33, CCK39, and CCK58 as well as CCK-octapeptide and the CCK-desoctapeptides. Distribution differences are due to tissue-specific post-translational processing events. Post-translationally, the precursor is cleaved by ACE, which removes the Gly-Arg-Arg peptide at the C-terminus, leading to mature hormone. As to expression, synthesized in both cerebral cortex and duodenal mucosa.

It localises to the secreted. Functionally, this peptide hormone induces gall bladder contraction and the release of pancreatic enzymes in the gut. Its function in the brain is not clear. Binding to CCK-A receptors stimulates amylase release from the pancreas, binding to CCK-B receptors stimulates gastric acid secretion. The sequence is that of Cholecystokinin (CCK) from Sus scrofa (Pig).